We begin with the raw amino-acid sequence, 207 residues long: Small ribosomal subunit protein uS4 (207 aa).

The region spanning 98 to 164 (RRLDNVVYRM…AKFKNLVEVN (67 aa)) is the S4 RNA-binding domain.

This sequence belongs to the universal ribosomal protein uS4 family. In terms of assembly, part of the 30S ribosomal subunit. Contacts protein S5. The interaction surface between S4 and S5 is involved in control of translational fidelity.

Functionally, one of the primary rRNA binding proteins, it binds directly to 16S rRNA where it nucleates assembly of the body of the 30S subunit. In terms of biological role, with S5 and S12 plays an important role in translational accuracy. This is Small ribosomal subunit protein uS4 from Clostridioides difficile (strain 630) (Peptoclostridium difficile).